Reading from the N-terminus, the 522-residue chain is Aspartic and glutamic acid-rich protein (522 aa).

The signal sequence occupies residues 1-16 (MKVFVYLLVTFSLTNA). 2 stretches are compositionally biased toward basic and acidic residues: residues 72–81 (YDDFFPKDTS) and 93–102 (SRNDDGYDLA). Residues 72–497 (YDDFFPKDTS…KSKDAAQGNI (426 aa)) are disordered. The span at 109–125 (DDEEAYDDFDEVDDRAD) shows a compositional bias: acidic residues. The span at 142–152 (KLPAEEESKND) shows a compositional bias: basic and acidic residues. Composition is skewed to acidic residues over residues 153-166 (MDEE…EEDK), 173-200 (FAED…EDEV), 228-261 (DNEE…DESD), and 267-283 (EVED…TEEG). Basic and acidic residues predominate over residues 284–343 (SEIKQNDETEEQPEKKFDADKEHEDAPEPLKEKLSDESKARAEDESDKSEDAAKEIKEPE). A coiled-coil region spans residues 319–465 (DESKARAEDE…KSNLALKRDE (147 aa)). The segment covering 358–374 (DEAELLDDEAELSDDEA) has biased composition (acidic residues). Basic and acidic residues-rich tracts occupy residues 375–397 (ELSK…KAEK), 407–453 (DEAK…EFAK), and 461–491 (LKRD…KSKD).

In terms of tissue distribution, component of the acid-soluble organic matrix of the aragonitic skeleton (at protein level).

Its subcellular location is the secreted. This is Aspartic and glutamic acid-rich protein from Acropora millepora (Staghorn coral).